A 424-amino-acid chain; its full sequence is UDP-N-acetylglucosamine 1-carboxyvinyltransferase (424 aa).

22–23 (KN) contributes to the phosphoenolpyruvate binding site. Residue R93 participates in UDP-N-acetyl-alpha-D-glucosamine binding. Residue C117 is the Proton donor of the active site. 2-(S-cysteinyl)pyruvic acid O-phosphothioketal is present on C117. Residues 122–126 (RPVDL), 164–166 (SVG), D307, and I329 each bind UDP-N-acetyl-alpha-D-glucosamine.

It belongs to the EPSP synthase family. MurA subfamily.

It is found in the cytoplasm. The enzyme catalyses phosphoenolpyruvate + UDP-N-acetyl-alpha-D-glucosamine = UDP-N-acetyl-3-O-(1-carboxyvinyl)-alpha-D-glucosamine + phosphate. The protein operates within cell wall biogenesis; peptidoglycan biosynthesis. In terms of biological role, cell wall formation. Adds enolpyruvyl to UDP-N-acetylglucosamine. This chain is UDP-N-acetylglucosamine 1-carboxyvinyltransferase, found in Haemophilus influenzae (strain ATCC 51907 / DSM 11121 / KW20 / Rd).